The primary structure comprises 674 residues: Putative kinase-like protein TMKL1 (674 aa).

The signal sequence occupies residues Met-1–Thr-25. The Extracellular portion of the chain corresponds to Ser-26–Arg-295. N-linked (GlcNAc...) asparagine glycans are attached at residues Asn-57, Asn-90, Asn-95, and Asn-110. LRR repeat units follow at residues His-100–Phe-122, Met-124–Thr-146, Ser-148–Asn-169, and Lys-173–Pro-194. N-linked (GlcNAc...) asparagine glycans are attached at residues Asn-183 and Asn-195. LRR repeat units follow at residues Asn-200 to Phe-222, Gly-224 to Gly-244, and Glu-247 to Lys-269. N-linked (GlcNAc...) asparagine glycans are attached at residues Asn-252 and Asn-257. Residues Leu-296–Leu-323 traverse the membrane as a helical segment. At Gln-324–Phe-674 the chain is on the cytoplasmic side. Residues Ser-331 to Lys-350 are disordered. Positions Glu-333–Gly-348 are enriched in acidic residues. Ser-334 is modified (phosphoserine). The Protein kinase domain occupies Asn-373–Phe-674. Residue Thr-375 is modified to Phosphothreonine. Ser-454 is modified (phosphoserine). The disordered stretch occupies residues Leu-649–Phe-674.

Belongs to the protein kinase superfamily.

It localises to the membrane. Does not seem to have conserved a kinase activity. The chain is Putative kinase-like protein TMKL1 (TMKL1) from Arabidopsis thaliana (Mouse-ear cress).